The chain runs to 179 residues: Large ribosomal subunit protein uL5 (179 aa).

Belongs to the universal ribosomal protein uL5 family. Part of the 50S ribosomal subunit; part of the 5S rRNA/L5/L18/L25 subcomplex. Contacts the 5S rRNA and the P site tRNA. Forms a bridge to the 30S subunit in the 70S ribosome.

Its function is as follows. This is one of the proteins that bind and probably mediate the attachment of the 5S RNA into the large ribosomal subunit, where it forms part of the central protuberance. In the 70S ribosome it contacts protein S13 of the 30S subunit (bridge B1b), connecting the 2 subunits; this bridge is implicated in subunit movement. Contacts the P site tRNA; the 5S rRNA and some of its associated proteins might help stabilize positioning of ribosome-bound tRNAs. The chain is Large ribosomal subunit protein uL5 from Aeromonas salmonicida (strain A449).